A 95-amino-acid polypeptide reads, in one-letter code: Small ribosomal subunit protein bS6 (95 aa).

It belongs to the bacterial ribosomal protein bS6 family.

Functionally, binds together with bS18 to 16S ribosomal RNA. This chain is Small ribosomal subunit protein bS6, found in Aster yellows witches'-broom phytoplasma (strain AYWB).